Here is a 320-residue protein sequence, read N- to C-terminus: 3'-5' exoribonuclease YhaM (320 aa).

The segment at residues 18-90 is a DNA-binding region (OB); that stretch reads FLIKSATKAV…QLKIGSIRPT (73 aa). The HD domain maps to 163–279; sequence HVVCMLNVAK…LHMIDNIDAK (117 aa).

It belongs to the YhaM family.

In terms of biological role, shows a 3'-5' exoribonuclease activity. The protein is 3'-5' exoribonuclease YhaM of Halalkalibacterium halodurans (strain ATCC BAA-125 / DSM 18197 / FERM 7344 / JCM 9153 / C-125) (Bacillus halodurans).